Reading from the N-terminus, the 548-residue chain is MKNINPSQTSAWKALEQHFAQIKDIHLRELFEQDPDRFAKFSATFDDQILVDFSKNRITTETLKKLQALAKETDVAGAMRSLFSGEKINCTENRAVLHIALRNRSNTPMMVDGEDVMQQVNAVLAKMKDFSERVIHGEWKGYTGKGITDVVNIGIGGSDLGPYMVTEALKPYKNHLNMHFVSNVDGTHIAETLKALNPETTLFLIASKTFTTQETMTNAHSARDWFLKSAGDEGHIAKHFAALSTNGQEVKQFGIDTKNMFEFWDWVGGRYSLWSAIGLSIALSIGFENFEQLLSGAHAMDQHVANTPFEQNIPVLLALIGIWYNNFFGAETEAILPYDQYMHRFAAYFQQGNMESNGKYIDRNGHPVDYQTGPIIWGEPGTNGQHAFYQLIHQGTKLIPCDFIAPAISHNPLSDHHSKLLSNFFAQTEALAFGKSREQVDAEFATSGKTVVEVEHVAPFKVFEGNRPTNSILLREITPFSLGALIAMYEHKIFVQGAILNIFTFDQWGVELGKQLANRILPELKDDNRVVSHDSSTNGLINRFKAWR.

E355 serves as the catalytic Proton donor. Active-site residues include H386 and K514.

It belongs to the GPI family.

It localises to the cytoplasm. It carries out the reaction alpha-D-glucose 6-phosphate = beta-D-fructose 6-phosphate. Its pathway is carbohydrate biosynthesis; gluconeogenesis. The protein operates within carbohydrate degradation; glycolysis; D-glyceraldehyde 3-phosphate and glycerone phosphate from D-glucose: step 2/4. Its function is as follows. Catalyzes the reversible isomerization of glucose-6-phosphate to fructose-6-phosphate. In Photorhabdus laumondii subsp. laumondii (strain DSM 15139 / CIP 105565 / TT01) (Photorhabdus luminescens subsp. laumondii), this protein is Glucose-6-phosphate isomerase.